The sequence spans 101 residues: Small ribosomal subunit protein bS18c (101 aa).

The segment covering 1–19 has biased composition (basic residues); that stretch reads MDKSKQPFRKSKRSFRRRL. The disordered stretch occupies residues 1 to 26; sequence MDKSKQPFRKSKRSFRRRLPPIGSGD.

Belongs to the bacterial ribosomal protein bS18 family. In terms of assembly, part of the 30S ribosomal subunit.

The protein localises to the plastid. Its subcellular location is the chloroplast. The protein is Small ribosomal subunit protein bS18c of Phalaenopsis aphrodite subsp. formosana (Moth orchid).